Here is a 297-residue protein sequence, read N- to C-terminus: MARIGIHSFVWSASSAQSELERTLANTREAGFDLIEFSYLDPADVDIGGLAKRIADLGLGVAISIGLPGDGDISSADKAVAARGVEILNETVALTRDLGGRKVAGILSAGHGLQLEAPTRDQWSRSTAALAKVAETAKAAGVTLNLEIVNRFESNLLNTAAQGLAFIEDTGSDNIFLHLDTFHMNIEEADVGLAIRHAAGKIGYVHIGESHRGFLGTGNIDFAAIFDALTAVGYADDLSFESFSSEIVDENLSKKTAIWRNLWADNMALAKHARAFIGLGLETARRKAELVSARHKP.

Glutamate 147 acts as the Proton donor/acceptor in catalysis. Glutamate 147 serves as a coordination point for Mn(2+). Substrate is bound by residues glutamate 153 and 180–183; that span reads DTFH. Mn(2+)-binding residues include aspartate 180 and histidine 206. Substrate is bound at residue arginine 212. Glutamate 241 (proton donor/acceptor) is an active-site residue. Position 241 (glutamate 241) interacts with Mn(2+).

The protein belongs to the hyi family. In terms of assembly, homotetramer. It depends on Mn(2+) as a cofactor.

It catalyses the reaction L-ribulose = L-xylulose. The catalysed reaction is keto-D-tagatose = keto-D-sorbose. The enzyme catalyses D-allulose = keto-D-fructose. Strongly inhibited by Co(2+) and Ni(2+), and slightly inhibited by EDTA. Functionally, catalyzes the epimerization of various ketoses at the C(3) position. It is able to interconvert L-ribulose with high efficiency. The enzyme can also accept other ketopentoses such as D-psicose and D-tagatose with lower efficiency. This Mesorhizobium japonicum (strain LMG 29417 / CECT 9101 / MAFF 303099) (Mesorhizobium loti (strain MAFF 303099)) protein is L-ribulose 3-epimerase.